Here is a 625-residue protein sequence, read N- to C-terminus: Beta-galactosidase large subunit (625 aa).

Glutamate 465 functions as the Proton donor in the catalytic mechanism. Residue glutamate 533 is the Nucleophile of the active site.

Belongs to the glycosyl hydrolase 2 family. As to quaternary structure, heterodimer of a large (LacL) and a small subunit (LacM).

The enzyme catalyses Hydrolysis of terminal non-reducing beta-D-galactose residues in beta-D-galactosides.. Its function is as follows. Component of a beta-galactosidase. This is Beta-galactosidase large subunit from Latilactobacillus sakei (Lactobacillus sakei).